The chain runs to 629 residues: Probable alpha-L-arabinofuranosidase A (629 aa).

Residues 1 to 25 (MVALSTLSGLSALPFLFSLVQNVYG) form the signal peptide. Asparagine 36, asparagine 51, asparagine 140, asparagine 152, asparagine 168, asparagine 171, asparagine 260, asparagine 494, and asparagine 534 each carry an N-linked (GlcNAc...) asparagine glycan.

This sequence belongs to the glycosyl hydrolase 51 family.

Its subcellular location is the secreted. It catalyses the reaction Hydrolysis of terminal non-reducing alpha-L-arabinofuranoside residues in alpha-L-arabinosides.. It functions in the pathway glycan metabolism; L-arabinan degradation. Functionally, alpha-L-arabinofuranosidase involved in the degradation of arabinoxylan, a major component of plant hemicellulose. Acts only on small linear 1,5-alpha-linked L-arabinofuranosyl oligosaccharides. This Aspergillus oryzae (strain ATCC 42149 / RIB 40) (Yellow koji mold) protein is Probable alpha-L-arabinofuranosidase A (abfA).